A 40-amino-acid chain; its full sequence is Large ribosomal subunit protein bL36B (40 aa).

The protein belongs to the bacterial ribosomal protein bL36 family.

The protein is Large ribosomal subunit protein bL36B of Leifsonia xyli subsp. xyli (strain CTCB07).